The primary structure comprises 258 residues: Glutathione S-transferase DHAR3, chloroplastic (258 aa).

A chloroplast-targeting transit peptide spans 1-42 (MISLRFQPSTTAGVLSASVSRAGFIKRCGSTKPGRVGRFVTM). C52 carries the S-glutathionyl cysteine modification. Glutathione-binding residues include K54 and D65. L-ascorbate-binding residues include K54 and D65. The 74-residue stretch at 56–129 (SITTPNKLGD…DVITQALEEK (74 aa)) folds into the GST N-terminal domain. C66 acts as the Nucleophile in catalysis. C66 and C69 are disulfide-bonded. Residues 66 to 71 (CPFCQK) carry the Glutathione-binding motif. Glutathione-binding residues include K93, V106, S119, H205, and W252. The GST C-terminal domain occupies 130 to 258 (YPEPPLATPP…IAGWRPKVMG (129 aa)). An L-ascorbate-binding site is contributed by K255.

Belongs to the GST superfamily. DHAR family. As to quaternary structure, monomer. Interacts with TRX3. Post-translationally, partial S-glutathionylation and intramolecular disulfide bond formation between Cys-66 and Cys-69 in the presence of oxidized glutathione (GSSG). Could be reduced by TRX-dependent process.

It localises to the plastid. The protein resides in the chloroplast stroma. It carries out the reaction RX + glutathione = an S-substituted glutathione + a halide anion + H(+). It catalyses the reaction L-dehydroascorbate + 2 glutathione = glutathione disulfide + L-ascorbate. Functionally, displays a dual function. As a soluble protein, exhibits glutathione-dependent thiol transferase and dehydroascorbate (DHA) reductase activities. Key component of the ascorbate recycling system. Involved in the redox homeostasis, especially in scavenging of ROS under oxidative stresses. The polypeptide is Glutathione S-transferase DHAR3, chloroplastic (DHAR3) (Arabidopsis thaliana (Mouse-ear cress)).